Reading from the N-terminus, the 200-residue chain is dTTP/UTP pyrophosphatase (200 aa).

The active-site Proton acceptor is Asp-72.

The protein belongs to the Maf family. YhdE subfamily. A divalent metal cation is required as a cofactor.

The protein resides in the cytoplasm. The catalysed reaction is dTTP + H2O = dTMP + diphosphate + H(+). The enzyme catalyses UTP + H2O = UMP + diphosphate + H(+). In terms of biological role, nucleoside triphosphate pyrophosphatase that hydrolyzes dTTP and UTP. May have a dual role in cell division arrest and in preventing the incorporation of modified nucleotides into cellular nucleic acids. The polypeptide is dTTP/UTP pyrophosphatase (Pseudomonas savastanoi pv. phaseolicola (strain 1448A / Race 6) (Pseudomonas syringae pv. phaseolicola (strain 1448A / Race 6))).